We begin with the raw amino-acid sequence, 404 residues long: V-set and immunoglobulin domain-containing protein 1 (404 aa).

An N-terminal signal peptide occupies residues 1–22 (MMVFAFWKVFLILNCLAGQVNM). Positions 23–133 (VQVTIPDTFV…DFFGKNQGIL (111 aa)) constitute an Ig-like V-type domain. The Extracellular segment spans residues 23–233 (VQVTIPDTFV…EIDLTSSDPE (211 aa)). Asn-39 is a glycosylation site (N-linked (GlcNAc...) asparagine). 2 disulfide bridges follow: Cys-44–Cys-117 and Cys-162–Cys-212. An Ig-like C2-type domain is found at 141 to 228 (PSKPFCSIQG…GNSSCEIDLT (88 aa)). Asn-201 and Asn-220 each carry an N-linked (GlcNAc...) asparagine glycan. Residues 234 to 254 (VGIIIGALVGALTGAAIIICV) form a helical membrane-spanning segment. Residues 255–404 (VYFARNKVKS…REEEKETVKA (150 aa)) are Cytoplasmic-facing. Disordered stretches follow at residues 266 to 285 (QKNL…HHSR) and 298 to 404 (EGTL…TVKA). A phosphoserine mark is found at Ser-271 and Ser-272. The segment covering 301 to 314 (LPSSIHASHNTEPT) has biased composition (polar residues). The segment covering 357 to 383 (MELEPETEPEPEPEPEPQPELESELEP) has biased composition (acidic residues). Residues 393–404 (PMREEEKETVKA) show a composition bias toward basic and acidic residues.

It localises to the membrane. This Rattus norvegicus (Rat) protein is V-set and immunoglobulin domain-containing protein 1 (Vsig1).